The chain runs to 364 residues: Lysophosphatidic acid receptor 1 (364 aa).

The Extracellular portion of the chain corresponds to 1–50; sequence MAAISTSIPVISQPQFTAMNEPQCFYNESIAFFYNRSGKHLATEWNTVSK. 2 disulfide bridges follow: cysteine 24–cysteine 190 and cysteine 188–cysteine 195. Asparagine 27 and asparagine 35 each carry an N-linked (GlcNAc...) asparagine glycan. Lysine 39 contacts a 1-acyl-sn-glycero-3-phosphate. The chain crosses the membrane as a helical span at residues 51-75; that stretch reads LVMGLGITVCIFIMLANLLVMVAIY. Residues 76–83 lie on the Cytoplasmic side of the membrane; sequence VNRRFHFP. A helical membrane pass occupies residues 84-107; sequence IYYLMANLAAADFFAGLAYFYLMF. Residues 108–121 lie on the Extracellular side of the membrane; that stretch reads NTGPNTRRLTVSTW. A helical transmembrane segment spans residues 122-144; that stretch reads LLRQGLIDTSLTASVANLLAIAI. 124–129 contributes to the a 1-acyl-sn-glycero-3-phosphate binding site; it reads RQGLID. At 145 to 163 the chain is on the cytoplasmic side; the sequence is ERHITVFRMQLHTRMSNRR. Residues 164–184 traverse the membrane as a helical segment; that stretch reads VVVVIVVIWTMAIVMGAIPSV. The Extracellular segment spans residues 185–204; it reads GWNCICDIENCSNMAPLYSD. A helical transmembrane segment spans residues 205–225; sequence SYLVFWAIFNLVTFVVMVVLY. A 1-acyl-sn-glycero-3-phosphate is bound at residue tryptophan 210. The Cytoplasmic segment spans residues 226-255; sequence AHIFGYVRQRTMRMSRHSSGPRRNRDTMMS. Residues 256 to 280 traverse the membrane as a helical segment; the sequence is LLKTVVIVLGAFIICWTPGLVLLLL. Topologically, residues 281-294 are extracellular; it reads DVCCPQCDVLAYEK. A disulfide bridge connects residues cysteine 284 and cysteine 287. The chain crosses the membrane as a helical span at residues 295-315; that stretch reads FFLLLAEFNSAMNPIIYSYRD. At 316 to 364 the chain is on the cytoplasmic side; the sequence is KEMSATFRQILCCQRSENPTGPTEGSDRSASSLNHTILAGVHSNDHSVV. Serine 341 bears the Phosphoserine mark. Position 351 is a phosphothreonine (threonine 351).

It belongs to the G-protein coupled receptor 1 family. In terms of assembly, interacts with RALA and GRK2. Interacts with GNAQ and GNA13. Interacts with CD14; the interaction is enhanced by exposure to bacterial lipopolysaccharide (LPS). Post-translationally, N-glycosylated. In terms of tissue distribution, expressed in many adult organs, including brain, heart, colon, small intestine, placenta, prostate, ovary, pancreas, testes, spleen, skeletal muscle, and kidney. Little or no expression in liver, lung, thymus, or peripheral blood leukocytes. Detected in lung fibroblasts from bronchoalveolar fluid from patients with idiopathic pulmonary fibrosis. Detected in bone marrow-derived mesenchymal stem cells.

The protein resides in the cell surface. The protein localises to the cell membrane. It localises to the endosome. Its function is as follows. Receptor for lysophosphatidic acid (LPA). Plays a role in the reorganization of the actin cytoskeleton, cell migration, differentiation and proliferation, and thereby contributes to the responses to tissue damage and infectious agents. Activates downstream signaling cascades via the G(i)/G(o), G(12)/G(13), and G(q) families of heteromeric G proteins. Signaling inhibits adenylyl cyclase activity and decreases cellular cAMP levels. Signaling triggers an increase of cytoplasmic Ca(2+) levels. Activates RALA; this leads to the activation of phospholipase C (PLC) and the formation of inositol 1,4,5-trisphosphate. Signaling mediates activation of down-stream MAP kinases. Contributes to the regulation of cell shape. Promotes Rho-dependent reorganization of the actin cytoskeleton in neuronal cells and neurite retraction. Promotes the activation of Rho and the formation of actin stress fibers. Promotes formation of lamellipodia at the leading edge of migrating cells via activation of RAC1. Through its function as LPA receptor, plays a role in chemotaxis and cell migration, including responses to injury and wounding. Plays a role in triggering inflammation in response to bacterial lipopolysaccharide (LPS) via its interaction with CD14. Promotes cell proliferation in response to LPA. Inhibits the intracellular ciliogenesis pathway in response to LPA and through AKT1 activation. Required for normal skeleton development. May play a role in osteoblast differentiation. Required for normal brain development. Required for normal proliferation, survival and maturation of newly formed neurons in the adult dentate gyrus. Plays a role in pain perception and in the initiation of neuropathic pain. This is Lysophosphatidic acid receptor 1 (LPAR1) from Homo sapiens (Human).